The sequence spans 961 residues: E3 ubiquitin-protein ligase TRIM37 (961 aa).

At M1 the chain carries N-acetylmethionine. Residues 15 to 55 (CFICMEKLRDARLCPHCSKLCCFSCIRRWLTEQRAQCPHCR) form an RING-type; degenerate zinc finger. A B box-type zinc finger spans residues 90–132 (NEKDKCENHHEKLSVFCWTCKKCICHQCALWGGMHGGHTFKPL). C95, H98, C117, and H124 together coordinate Zn(2+). Residues 132 to 234 (LAEIYEQHVT…VEHQLRSCSK (103 aa)) adopt a coiled-coil conformation. Residues 276–403 (YDSATFVLEN…NDTVILRFQV (128 aa)) enclose the MATH domain. Positions 419 to 450 (ITQLEAAQTGYIQQINNLKERLTIELSRTQKS) form a coiled coil. Disordered regions lie at residues 447–514 (TQKS…HHEL), 529–561 (VNHLDGSSSSASSTATSNTEENDIDEETMSGEN), 645–665 (SLLQPTASYSRKDKDQRKQQA), 776–811 (AVDSGENSRSKGDCQVLAEGSSGSSQSGSRHSSPRA), and 874–961 (LESH…GGGR). Phosphoserine is present on S454. Residues 504 to 514 (KIQNEDYHHEL) show a composition bias toward basic and acidic residues. The span at 535-545 (SSSSASSTATS) shows a compositional bias: low complexity. Residues 548-561 (EENDIDEETMSGEN) show a composition bias toward acidic residues. Residues 776 to 787 (AVDSGENSRSKG) are compositionally biased toward basic and acidic residues. Residues 795–806 (GSSGSSQSGSRH) are compositionally biased toward low complexity. Residues 903-915 (SDIECDTENEEQE) are compositionally biased toward acidic residues.

The protein belongs to the TRIM/RBCC family. Associates with the PRC2/EED-EZH2 complex. Post-translationally, auto-ubiquitinated. In terms of tissue distribution, highly expressed in testis and brain. In embryonic tissues, expressed in epithelia, including ducts of the developing pancreas, epithelium of the midgut and nasal epithelium. In adult, detected in the central and peripheral nervous systems, including enteric ganglia, retina and the adrenal medulla (at protein level).

The protein localises to the chromosome. It localises to the cytoplasm. Its subcellular location is the perinuclear region. It is found in the peroxisome membrane. It catalyses the reaction S-ubiquitinyl-[E2 ubiquitin-conjugating enzyme]-L-cysteine + [acceptor protein]-L-lysine = [E2 ubiquitin-conjugating enzyme]-L-cysteine + N(6)-ubiquitinyl-[acceptor protein]-L-lysine.. The protein operates within protein modification; protein ubiquitination. Its function is as follows. E3 ubiquitin-protein ligase required to prevent centriole reduplication. Probably acts by ubiquitinating positive regulators of centriole reduplication. Mediates monoubiquitination of 'Lys-119' of histone H2A (H2AK119Ub), a specific tag for epigenetic transcriptional repression: associates with some Polycomb group (PcG) multiprotein PRC2-like complex and mediates repression of target genes. Also acts as a positive regulator of peroxisome import by mediating monoubiquitination of PEX5 at 'Lys-472': monoubiquitination promotes PEX5 stabilitation by preventing its polyubiquitination and degradation by the proteasome. The sequence is that of E3 ubiquitin-protein ligase TRIM37 from Mus musculus (Mouse).